A 237-amino-acid chain; its full sequence is Ribosomal RNA small subunit methyltransferase G (237 aa).

Residues G78, F83, 129–130 (AE), and R148 contribute to the S-adenosyl-L-methionine site.

Belongs to the methyltransferase superfamily. RNA methyltransferase RsmG family.

It is found in the cytoplasm. Specifically methylates the N7 position of a guanine in 16S rRNA. In Streptococcus pyogenes serotype M6 (strain ATCC BAA-946 / MGAS10394), this protein is Ribosomal RNA small subunit methyltransferase G.